Here is a 500-residue protein sequence, read N- to C-terminus: Perfringolysin O (500 aa).

An N-terminal signal peptide occupies residues 1–28 (MIRFKKTKLIASIAMALCLFSQPVISFS). Transmembrane regions (beta stranded) follow at residues 189 to 202 (KSQI…NAKV), 209 to 218 (VDFNAVANNE), 287 to 296 (SKDVQAAFKA), and 304 to 316 (KNSQ…YENS). A Conserved undecapeptide motif is present at residues 458–468 (ECTGLAWEWWR). Residues 490–491 (TL) carry the Cholesterol binding motif.

It belongs to the cholesterol-dependent cytolysin family. Homooligomeric pore complex of 35 to 50 subunits; when inserted in the host membrane.

It is found in the secreted. The protein resides in the host cell membrane. Functionally, a cholesterol-dependent toxin that causes cytolysis by forming pores in cholesterol containing host membranes. After binding to target membranes, the protein assembles into a pre-pore complex. A conformation change leads to insertion in the host membrane and formation of an oligomeric pore complex. Cholesterol is required for binding to host cell membranes, membrane insertion and pore formation; cholesterol binding is mediated by a Thr-Leu pair in the C-terminus. Can be reversibly inactivated by oxidation. The polypeptide is Perfringolysin O (pfo) (Clostridium perfringens (strain ATCC 13124 / DSM 756 / JCM 1290 / NCIMB 6125 / NCTC 8237 / Type A)).